The chain runs to 1523 residues: Disco-interacting protein 2 homolog A (1523 aa).

Positions 9 to 105 (EAAPLPAEVL…TSSASEDEGS (97 aa)) constitute a DMAP1-binding domain. Residues 72–110 (KMPMPSKRRSALVHSSVETYTPPDTSSASEDEGSLRRPG) form a disordered region. Polar residues predominate over residues 87–99 (SVETYTPPDTSSA). T92 and T115 each carry phosphothreonine. Residues 132-158 (QGSSTSSSASSTSSHPGGRPAAAPSAS) form a disordered region. Residues 134–158 (SSTSSSASSTSSHPGGRPAAAPSAS) are compositionally biased toward low complexity. 2 short sequence motifs (PXXP motif; required for interaction with CTTN) span residues 235-238 (PKRP) and 259-262 (PNQP).

The protein belongs to the DIP2 family. In terms of assembly, interacts with FSTL1; DIP2A may act as a cell surface receptor for FSTL1. Interacts (via N-terminus) with CTTN (via SH3 domain); the interaction promotes acetylation of CTTN and is required for proper synaptic transmission. Interacts with SHANK3. As to expression, detected in heart, liver, spleen, lung, kidney and brain with highest levels in brain (at protein level). In adult cortex, preferentially expressed in excitatory neurons. Broadly expressed in neuronal, reproductive and vascular tissues as well as in heart, kidney, liver and lung with expression detected in neurons, mesenchyme, endothelium, smooth muscle cells and cardiomyocytes. Expressed in ectoderm-derived tissues in the developing embryo. Expressed in the developing nervous system.

It is found in the cell membrane. Its subcellular location is the mitochondrion. The protein localises to the cell projection. The protein resides in the dendritic spine. The enzyme catalyses acetate + ATP + CoA = acetyl-CoA + AMP + diphosphate. In terms of biological role, catalyzes the de novo synthesis of acetyl-CoA in vitro. Promotes acetylation of CTTN, possibly by providing the acetyl donor, ensuring correct dendritic spine morphology and synaptic transmission. Binds to follistatin-related protein FSTL1 and may act as a cell surface receptor for FSTL1, contributing to AKT activation and subsequent FSTL1-induced survival and function of endothelial cells and cardiac myocytes. The chain is Disco-interacting protein 2 homolog A (Dip2a) from Mus musculus (Mouse).